We begin with the raw amino-acid sequence, 338 residues long: Phosphate acyltransferase (338 aa).

The protein belongs to the PlsX family. In terms of assembly, homodimer. Probably interacts with PlsY.

It is found in the cytoplasm. It carries out the reaction a fatty acyl-[ACP] + phosphate = an acyl phosphate + holo-[ACP]. Its pathway is lipid metabolism; phospholipid metabolism. Functionally, catalyzes the reversible formation of acyl-phosphate (acyl-PO(4)) from acyl-[acyl-carrier-protein] (acyl-ACP). This enzyme utilizes acyl-ACP as fatty acyl donor, but not acyl-CoA. The protein is Phosphate acyltransferase of Alcanivorax borkumensis (strain ATCC 700651 / DSM 11573 / NCIMB 13689 / SK2).